The following is a 437-amino-acid chain: Aspartic proteinase nepenthesin-1 (437 aa).

Positions 1 to 24 (MASSLYSFLLALSIVYIFVAPTHS) are cleaved as a signal peptide. Residues 25–78 (TSRTALNHRHEAKVTGFQIMLEHVDSGKNLTKFQLLERAIERGSRRLQRLEAML) constitute a propeptide, activation peptide. Residues Asn53 and Asn98 are each glycosylated (N-linked (GlcNAc...) asparagine). Residues 95 to 430 (YLMNLSIGTP…DTGNSVVSFA (336 aa)) enclose the Peptidase A1 domain. Asp113 is an active-site residue. 6 disulfide bridges follow: Cys123–Cys126, Cys129–Cys203, Cys150–Cys168, Cys155–Cys163, Cys240–Cys434, and Cys354–Cys395. A glycan (N-linked (GlcNAc...) asparagine) is linked at Asn131. N-linked (GlcNAc...) asparagine glycosylation is found at Asn198, Asn267, and Asn307. Asp315 is a catalytic residue. N-linked (GlcNAc...) asparagine glycosylation occurs at Asn345.

Belongs to the peptidase A1 family.

Its subcellular location is the secreted. The catalysed reaction is Similar to pepsin, but also cleaves on either side of Asp and at Lys-|-Arg.. With respect to regulation, inhibited by pepstatin and by diazoacetyl-D,L-norleucine methyl ester (DAN) in the presence of Cu(2+) ions. Extracellular proteinase found in the pitcher fluid of carnivorous plants. Digest prey for nitrogen uptake. The polypeptide is Aspartic proteinase nepenthesin-1 (nep1) (Nepenthes gracilis (Slender pitcher plant)).